Reading from the N-terminus, the 804-residue chain is Putative mRNA-capping enzyme P5 (804 aa).

It belongs to the phytoreovirus protein P5 family.

Its subcellular location is the virion. It is found in the host cytoplasm. It carries out the reaction a 5'-end diphospho-ribonucleoside in mRNA + GTP + H(+) = a 5'-end (5'-triphosphoguanosine)-ribonucleoside in mRNA + diphosphate. It functions in the pathway mRNA processing; mRNA capping. Enzyme involved in mRNA capping (Potential). Binds to GTP and might have guanylyltransferase activity. Together with the RNA-directed RNA polymerase P1 and protein P7, forms an transcriptional complex positioned near the channels situated at each of the five-fold vertices of the core. This chain is Putative mRNA-capping enzyme P5, found in Catharanthus roseus (Madagascar periwinkle).